Here is an 87-residue protein sequence, read N- to C-terminus: Beta-defensin 109 (87 aa).

An N-terminal signal peptide occupies residues 1-22 (MRLHLLLLILLLFSILLSPVRG). 3 disulfide bridges follow: C31–C59, C38–C53, and C43–C60.

This sequence belongs to the beta-defensin family.

It localises to the secreted. Its function is as follows. Has antibacterial activity. The protein is Beta-defensin 109 (DEFB109) of Pan troglodytes (Chimpanzee).